Reading from the N-terminus, the 300-residue chain is ETS homologous factor (300 aa).

In terms of domain architecture, PNT spans 29–115 (STCNVSSGFF…SNLQHLKWNG (87 aa)). A disordered region spans residues 183–202 (ESPDMKKEQDPPAKCHTKKH). The span at 185–195 (PDMKKEQDPPA) shows a compositional bias: basic and acidic residues. The ETS DNA-binding region spans 207 to 289 (THLWEFIRDI…DGRRLVYKFG (83 aa)).

The protein belongs to the ETS family.

The protein localises to the nucleus. Its function is as follows. Transcriptional activator that may play a role in regulating epithelial cell differentiation and proliferation. May act as a repressor for a specific subset of ETS/AP-1-responsive genes, and as a modulator of the nuclear response to mitogen-activated protein kinase signaling cascades. Binds to DNA sequences containing the consensus nucleotide core sequence GGAA. Involved in regulation of TNFRSF10B/DR5 expression through Ets-binding sequences on the TNFRSF10B/DR5 promoter. The protein is ETS homologous factor (EHF) of Pan troglodytes (Chimpanzee).